The sequence spans 431 residues: Trigger factor (431 aa).

Residues 161 to 246 enclose the PPIase FKBP-type domain; that stretch reads DDRVTIDFVG…LKKVENIVLP (86 aa).

The protein belongs to the FKBP-type PPIase family. Tig subfamily.

Its subcellular location is the cytoplasm. The catalysed reaction is [protein]-peptidylproline (omega=180) = [protein]-peptidylproline (omega=0). In terms of biological role, involved in protein export. Acts as a chaperone by maintaining the newly synthesized protein in an open conformation. Functions as a peptidyl-prolyl cis-trans isomerase. The chain is Trigger factor from Glaesserella parasuis serovar 5 (strain SH0165) (Haemophilus parasuis).